The primary structure comprises 825 residues: Phenylalanine--tRNA ligase beta subunit (825 aa).

In terms of domain architecture, tRNA-binding spans 39–154 (RTWADGVVLG…EAHPLGSDVR (116 aa)). Residues 411–506 (PLERTLKLRL…RLYGYDRFSE (96 aa)) form the B5 domain. Asp484, Asp490, Glu493, and Glu494 together coordinate Mg(2+). The 94-residue stretch at 731 to 824 (SPFPAADRDI…LATQFPVTLR (94 aa)) folds into the FDX-ACB domain.

Belongs to the phenylalanyl-tRNA synthetase beta subunit family. Type 1 subfamily. As to quaternary structure, tetramer of two alpha and two beta subunits. Mg(2+) serves as cofactor.

It is found in the cytoplasm. It catalyses the reaction tRNA(Phe) + L-phenylalanine + ATP = L-phenylalanyl-tRNA(Phe) + AMP + diphosphate + H(+). In Synechococcus sp. (strain JA-2-3B'a(2-13)) (Cyanobacteria bacterium Yellowstone B-Prime), this protein is Phenylalanine--tRNA ligase beta subunit.